Consider the following 165-residue polypeptide: Urease accessory protein UreE (165 aa).

Belongs to the UreE family.

It localises to the cytoplasm. Its function is as follows. Involved in urease metallocenter assembly. Binds nickel. Probably functions as a nickel donor during metallocenter assembly. The chain is Urease accessory protein UreE from Micrococcus luteus (strain ATCC 4698 / DSM 20030 / JCM 1464 / CCM 169 / CCUG 5858 / IAM 1056 / NBRC 3333 / NCIMB 9278 / NCTC 2665 / VKM Ac-2230) (Micrococcus lysodeikticus).